A 289-amino-acid chain; its full sequence is Putative 2-aminoethylphosphonate transport system permease protein PhnU (289 aa).

A run of 6 helical transmembrane segments spans residues 19-39 (WLLL…SLIV), 76-96 (FFAT…LVFI), 111-131 (FIAL…GSAG), 150-170 (FLYS…PLVM), 202-222 (VIFP…LLLT), and 254-274 (YTVA…LFSL). Positions 68-275 (LLNTLQIAFF…VLSLGLFSLY (208 aa)) constitute an ABC transmembrane type-1 domain.

This sequence belongs to the binding-protein-dependent transport system permease family.

It localises to the cell inner membrane. Probably part of the PhnSTUV complex (TC 3.A.1.11.5) involved in 2-aminoethylphosphonate import. Probably responsible for the translocation of the substrate across the membrane. This Salmonella typhi protein is Putative 2-aminoethylphosphonate transport system permease protein PhnU (phnU).